A 122-amino-acid chain; its full sequence is uncharacterized protein (122 aa).

Transmembrane regions (helical) follow at residues 14-34 (WLWI…FNNV) and 83-103 (IIGV…YFII).

The protein localises to the cell membrane. This is an uncharacterized protein from Ureaplasma parvum serovar 3 (strain ATCC 700970).